The following is a 75-amino-acid chain: MEQTFYQFLMTYRGKLEKDDNSELAEWAFRNHNFPKHSNTYDEISNYLEWNSPFPSATVTFDSLWNEYEWKKAAY.

It belongs to the UPF0346 family.

The polypeptide is UPF0346 protein OB1736 (Oceanobacillus iheyensis (strain DSM 14371 / CIP 107618 / JCM 11309 / KCTC 3954 / HTE831)).